Consider the following 310-residue polypeptide: MRVILAPMQGVLDPFVRELLTEVNDYDLCITEFVRVVDQLLPEKVFYRLCPELKNQGFTSSGTPVRVQLLGQHPKCLAENAIRAIDLGSHGIDLNCGCPSKTVNGSNGGAALLKQPELIYRATQALRRAVPSEFPVSVKVRLGWDDISQAFEIADAVEQGGATEITVHGRTKADGYRADRINWKKISEVRERLSIPVIANGEIWHWQDGQDCLSQTGCQDLMVGRGALNIPNLSHVLKSNAEKMPWYEIQKILQKYANVENEYDSGFYHVARIKQWLRYLNKEYNEANQVFDKIKTCQTAEDLKLRLNEK.

FMN contacts are provided by residues Pro7 to Gln9 and Gln68. Residue Cys98 is the Proton donor of the active site. FMN contacts are provided by residues Lys139, Asn200 to Glu202, and Gly224 to Arg225.

This sequence belongs to the Dus family. DusC subfamily. It depends on FMN as a cofactor.

It carries out the reaction 5,6-dihydrouridine(16) in tRNA + NADP(+) = uridine(16) in tRNA + NADPH + H(+). The catalysed reaction is 5,6-dihydrouridine(16) in tRNA + NAD(+) = uridine(16) in tRNA + NADH + H(+). Catalyzes the synthesis of 5,6-dihydrouridine (D), a modified base found in the D-loop of most tRNAs, via the reduction of the C5-C6 double bond in target uridines. Specifically modifies U16 in tRNAs. The chain is tRNA-dihydrouridine(16) synthase from Haemophilus influenzae (strain ATCC 51907 / DSM 11121 / KW20 / Rd).